A 164-amino-acid polypeptide reads, in one-letter code: MEGLDINKLLDISDLPGIDGEEIKVYEPLQLVEVKSNPQNRTPDLEDDYGVVRRNMHFQQQMLMDAAKIFLETAKNADSPRHMEVFATLMGQMTTTNREILKLHKDMKDITSEQVGTKGAVPTGQMNIQNATVFMGSPTELMDEIGDAYEAQEAREKVINGTTD.

A helix-turn-helix (HTH) region spans residues 1 to 35 (MEGLDINKLLDISDLPGIDGEEIKVYEPLQLVEVK). The segment at 1–35 (MEGLDINKLLDISDLPGIDGEEIKVYEPLQLVEVK) is interaction with gp17. The segment at 36-114 (SNPQNRTPDL…KDMKDITSEQ (79 aa)) is oligomerization. Positions 115 to 164 (VGTKGAVPTGQMNIQNATVFMGSPTELMDEIGDAYEAQEAREKVINGTTD) are interaction with gp17.

In terms of assembly, homooctamer. Interacts with the terminase large subunit gp17; the active complex is probably heterooligomeric.

Its function is as follows. The terminase small subunit binds to the packaging initiation site and regulates the ATPase activity of the terminase large subunit. The terminase lies at a unique vertex of the procapsid and is composed of two subunits, a small terminase subunit involved in viral DNA recognition (packaging 'pac' sequence), and a large terminase subunit possessing endonucleolytic and ATPase activities. Both terminase subunits heterooligomerize and are docked on the portal protein to form the packaging machine. The terminase large subunit exhibits endonuclease activity and cleaves the viral genome concatemer once the capsid is full (headful packaging). Once the capsid is packaged with the DNA, the terminase complex is substituted by neck proteins. This is Terminase, small subunit (16) from Enterobacteria phage T4 (Bacteriophage T4).